We begin with the raw amino-acid sequence, 234 residues long: Phosphoribosylaminoimidazole-succinocarboxamide synthase (234 aa).

Belongs to the SAICAR synthetase family.

The catalysed reaction is 5-amino-1-(5-phospho-D-ribosyl)imidazole-4-carboxylate + L-aspartate + ATP = (2S)-2-[5-amino-1-(5-phospho-beta-D-ribosyl)imidazole-4-carboxamido]succinate + ADP + phosphate + 2 H(+). Its pathway is purine metabolism; IMP biosynthesis via de novo pathway; 5-amino-1-(5-phospho-D-ribosyl)imidazole-4-carboxamide from 5-amino-1-(5-phospho-D-ribosyl)imidazole-4-carboxylate: step 1/2. The chain is Phosphoribosylaminoimidazole-succinocarboxamide synthase from Streptococcus agalactiae serotype III (strain NEM316).